Consider the following 172-residue polypeptide: Adenine phosphoribosyltransferase (172 aa).

This sequence belongs to the purine/pyrimidine phosphoribosyltransferase family. Homodimer.

The protein localises to the cytoplasm. The catalysed reaction is AMP + diphosphate = 5-phospho-alpha-D-ribose 1-diphosphate + adenine. The protein operates within purine metabolism; AMP biosynthesis via salvage pathway; AMP from adenine: step 1/1. Its function is as follows. Catalyzes a salvage reaction resulting in the formation of AMP, that is energically less costly than de novo synthesis. The sequence is that of Adenine phosphoribosyltransferase from Clostridium botulinum (strain Eklund 17B / Type B).